The chain runs to 245 residues: 3-deoxy-manno-octulosonate cytidylyltransferase (245 aa).

Belongs to the KdsB family.

It localises to the cytoplasm. The catalysed reaction is 3-deoxy-alpha-D-manno-oct-2-ulosonate + CTP = CMP-3-deoxy-beta-D-manno-octulosonate + diphosphate. Its pathway is nucleotide-sugar biosynthesis; CMP-3-deoxy-D-manno-octulosonate biosynthesis; CMP-3-deoxy-D-manno-octulosonate from 3-deoxy-D-manno-octulosonate and CTP: step 1/1. The protein operates within bacterial outer membrane biogenesis; lipopolysaccharide biosynthesis. In terms of biological role, activates KDO (a required 8-carbon sugar) for incorporation into bacterial lipopolysaccharide in Gram-negative bacteria. This chain is 3-deoxy-manno-octulosonate cytidylyltransferase, found in Desulfatibacillum aliphaticivorans.